Reading from the N-terminus, the 407-residue chain is MDNVLPVDSDLSPNISTNTSEPNQFVQPAWQIVLWAAAYTVIVVTSVVGNVVVMWIILAHKRMRTVTNYFLVNLAFAEASMAAFNTVVNFTYAVHNEWYYGLFYCKFHNFFPIAAVFASIYSMTAVAFDRYMAIIHPLQPRLSATATKVVICVIWVLALLLAFPQGYYSTTETMPSRVVCMIEWPEHPNKIYEKVYHICVTVLIYFLPLLVIGYAYTVVGITLWASEIPGDSSDRYHEQVSAKRKVVKMMIVVVCTFAICWLPFHIFFLLPYINPDLYLKKFIQQVYLAIMWLAMSSTMYNPIIYCCLNDRFRLGFKHAFRCCPFISAGDYEGLEMKSTRYLQTQGSVYKVSRLETTISTVVGAHEEEPEDGPKATPSSLDLTSNCSSRSDSKTMTESFSFSSNVLS.

The Extracellular portion of the chain corresponds to 1-31; sequence MDNVLPVDSDLSPNISTNTSEPNQFVQPAWQ. 2 N-linked (GlcNAc...) asparagine glycosylation sites follow: Asn14 and Asn18. Residues 32 to 54 form a helical membrane-spanning segment; that stretch reads IVLWAAAYTVIVVTSVVGNVVVM. Residues 55-64 lie on the Cytoplasmic side of the membrane; it reads WIILAHKRMR. The chain crosses the membrane as a helical span at residues 65–86; that stretch reads TVTNYFLVNLAFAEASMAAFNT. Residues 87-106 are Extracellular-facing; that stretch reads VVNFTYAVHNEWYYGLFYCK. The cysteines at positions 105 and 180 are disulfide-linked. A helical membrane pass occupies residues 107-128; the sequence is FHNFFPIAAVFASIYSMTAVAF. Topologically, residues 129–148 are cytoplasmic; sequence DRYMAIIHPLQPRLSATATK. The chain crosses the membrane as a helical span at residues 149–169; that stretch reads VVICVIWVLALLLAFPQGYYS. At 170-194 the chain is on the extracellular side; it reads TTETMPSRVVCMIEWPEHPNKIYEK. The chain crosses the membrane as a helical span at residues 195–219; it reads VYHICVTVLIYFLPLLVIGYAYTVV. His197 is a binding site for CP-96345. Topologically, residues 220-248 are cytoplasmic; it reads GITLWASEIPGDSSDRYHEQVSAKRKVVK. Residues 249–270 form a helical membrane-spanning segment; sequence MMIVVVCTFAICWLPFHIFFLL. At 271-283 the chain is on the extracellular side; it reads PYINPDLYLKKFI. The helical transmembrane segment at 284-308 threads the bilayer; that stretch reads QQVYLAIMWLAMSSTMYNPIIYCCL. The Cytoplasmic portion of the chain corresponds to 309–407; sequence NDRFRLGFKH…SFSFSSNVLS (99 aa). The S-palmitoyl cysteine moiety is linked to residue Cys322. Residues 364-407 form a disordered region; sequence AHEEEPEDGPKATPSSLDLTSNCSSRSDSKTMTESFSFSSNVLS. Over residues 376-407 the composition is skewed to polar residues; that stretch reads TPSSLDLTSNCSSRSDSKTMTESFSFSSNVLS.

The protein belongs to the G-protein coupled receptor 1 family. Interacts with ARRB1.

It localises to the cell membrane. This is a receptor for the tachykinin neuropeptide substance P. It is probably associated with G proteins that activate a phosphatidylinositol-calcium second messenger system. The rank order of affinity of this receptor to tachykinins is: substance P &gt; substance K &gt; neuromedin-K. The polypeptide is Substance-P receptor (TACR1) (Homo sapiens (Human)).